A 712-amino-acid chain; its full sequence is Polyribonucleotide nucleotidyltransferase (712 aa).

Asp487 and Asp493 together coordinate Mg(2+). One can recognise a KH domain in the interval 554 to 613 (PKIITMTINPDKIRDVIGPSGKQINKIIEETGVKIDIEQDGTVFISSINQEMNDKAKKII). An S1 motif domain is found at 623 to 691 (GEIYEGKVKR…KQGRVNLSRK (69 aa)).

This sequence belongs to the polyribonucleotide nucleotidyltransferase family. The cofactor is Mg(2+).

Its subcellular location is the cytoplasm. It carries out the reaction RNA(n+1) + phosphate = RNA(n) + a ribonucleoside 5'-diphosphate. In terms of biological role, involved in mRNA degradation. Catalyzes the phosphorolysis of single-stranded polyribonucleotides processively in the 3'- to 5'-direction. In Bacillus cereus (strain G9842), this protein is Polyribonucleotide nucleotidyltransferase.